A 628-amino-acid chain; its full sequence is Probable alpha-L-arabinofuranosidase A (628 aa).

An N-terminal signal peptide occupies residues 1–25 (MVAFSTISGLGALSLLFSIIESVDG). N-linked (GlcNAc...) asparagine glycosylation is found at Asn-36, Asn-51, Asn-74, Asn-152, Asn-164, Asn-260, Asn-359, Asn-404, and Asn-493.

The protein belongs to the glycosyl hydrolase 51 family.

It is found in the secreted. The catalysed reaction is Hydrolysis of terminal non-reducing alpha-L-arabinofuranoside residues in alpha-L-arabinosides.. It participates in glycan metabolism; L-arabinan degradation. Its function is as follows. Alpha-L-arabinofuranosidase involved in the degradation of arabinoxylan, a major component of plant hemicellulose. Acts only on small linear 1,5-alpha-linked L-arabinofuranosyl oligosaccharides. This Aspergillus terreus (strain NIH 2624 / FGSC A1156) protein is Probable alpha-L-arabinofuranosidase A (abfA).